We begin with the raw amino-acid sequence, 282 residues long: Dof zinc finger protein 4 (282 aa).

The Dof-type zinc finger occupies 45 to 99 (VKCPRCESTNTKFCYYNNYNLSQPRHFCKSCRRYWTKGGVLRNVPVGGGCRKTKR). Zn(2+)-binding residues include Cys-47, Cys-50, Cys-72, and Cys-75. The interval 89-161 (PVGGGCRKTK…TTPATPSSNT (73 aa)) is disordered. Composition is skewed to low complexity over residues 102 to 117 (SSSA…TAAT) and 125 to 161 (RASA…SSNT).

Its subcellular location is the nucleus. Functionally, transcription factor that may transactivate seed storage protein genes in developing seeds. The polypeptide is Dof zinc finger protein 4 (Oryza sativa subsp. japonica (Rice)).